The primary structure comprises 258 residues: Beta carbonic anhydrase 3 (258 aa).

Positions 1-28 are cleaved as a signal peptide; it reads MSTESYEDAIKRLGELLSKKSDLGNVAA. Residues 24–54 adopt a coiled-coil conformation; it reads GNVAAAKIKKLTDELEELDSNKLDAVERIKS. At T35 the chain carries Phosphothreonine. At S95 the chain carries Phosphoserine. At C201 the chain carries S-nitrosocysteine.

The protein belongs to the beta-class carbonic anhydrase family. As to expression, strongly expressed in aerial tissues including leaves, stems, flowers and siliques, and, to a lower extent, in roots.

It localises to the cytoplasm. Its subcellular location is the cytosol. It carries out the reaction hydrogencarbonate + H(+) = CO2 + H2O. In terms of biological role, reversible hydration of carbon dioxide. This is Beta carbonic anhydrase 3 (BCA3) from Arabidopsis thaliana (Mouse-ear cress).